The following is a 69-amino-acid chain: Large ribosomal subunit protein uL29 (69 aa).

It belongs to the universal ribosomal protein uL29 family.

The protein is Large ribosomal subunit protein uL29 of Treponema denticola (strain ATCC 35405 / DSM 14222 / CIP 103919 / JCM 8153 / KCTC 15104).